Here is a 428-residue protein sequence, read N- to C-terminus: Histidine--tRNA ligase (428 aa).

It belongs to the class-II aminoacyl-tRNA synthetase family. In terms of assembly, homodimer.

The protein resides in the cytoplasm. The catalysed reaction is tRNA(His) + L-histidine + ATP = L-histidyl-tRNA(His) + AMP + diphosphate + H(+). The sequence is that of Histidine--tRNA ligase from Mesomycoplasma hyopneumoniae (strain J / ATCC 25934 / NCTC 10110) (Mycoplasma hyopneumoniae).